Reading from the N-terminus, the 116-residue chain is Large ribosomal subunit protein uL18 (116 aa).

This sequence belongs to the universal ribosomal protein uL18 family. As to quaternary structure, part of the 50S ribosomal subunit; part of the 5S rRNA/L5/L18/L25 subcomplex. Contacts the 5S and 23S rRNAs.

This is one of the proteins that bind and probably mediate the attachment of the 5S RNA into the large ribosomal subunit, where it forms part of the central protuberance. In Psychromonas ingrahamii (strain DSM 17664 / CCUG 51855 / 37), this protein is Large ribosomal subunit protein uL18.